The chain runs to 363 residues: NAD kinase 1 (363 aa).

Asp-68 serves as the catalytic Proton acceptor. NAD(+)-binding positions include 68–69 (DG), Arg-73, 175–176 (ND), Arg-186, Asp-205, Ala-240, and Gln-275.

Belongs to the NAD kinase family. The cofactor is a divalent metal cation.

The protein localises to the cytoplasm. The enzyme catalyses NAD(+) + ATP = ADP + NADP(+) + H(+). Involved in the regulation of the intracellular balance of NAD and NADP, and is a key enzyme in the biosynthesis of NADP. Catalyzes specifically the phosphorylation on 2'-hydroxyl of the adenosine moiety of NAD to yield NADP. The polypeptide is NAD kinase 1 (Streptomyces coelicolor (strain ATCC BAA-471 / A3(2) / M145)).